Here is a 297-residue protein sequence, read N- to C-terminus: Cyclin-dependent kinase 1 (297 aa).

Residues 4-293 (YQKVEKIGEG…AKRALQQNYL (290 aa)) form the Protein kinase domain. ATP-binding positions include 10-18 (IGEGTYGVV) and lysine 33. Phosphothreonine is present on threonine 14. At tyrosine 15 the chain carries Phosphotyrosine. Residue aspartate 134 is the Proton acceptor of the active site. At threonine 167 the chain carries Phosphothreonine.

It belongs to the protein kinase superfamily. CMGC Ser/Thr protein kinase family. CDC2/CDKX subfamily. In terms of assembly, forms a stable but non-covalent complex with regulatory subunit suc1 and with a cyclin. Interacts with cyclin cdc13. Interacts with cyclin cig2. Interacts with cdc37.

It localises to the cytoplasm. It catalyses the reaction L-seryl-[protein] + ATP = O-phospho-L-seryl-[protein] + ADP + H(+). It carries out the reaction L-threonyl-[protein] + ATP = O-phospho-L-threonyl-[protein] + ADP + H(+). Phosphorylation at Thr-14 or Tyr-15 inactivates the enzyme, while phosphorylation at Thr-167 activates it. Functionally, cyclin-dependent kinase that acts as a master regulator of the mitotic and meiotic cell cycles. Required to drive the G1-S and G2-M transitions, and initiation of premeiotic DNA replication and meiosis II. More than 200 substrates have been identified. Substrate specificity is in part regulated by the bound cyclin protein. When complexed with cyclin cig2, it drives the G1-S phase transition. When complexed with cyclin cdc13, it drives the G2-M transition and initiation of meiosis II. Its activity rises throughout the cell cycle and substrate specificity is further influenced by activity thresholds with more sensitive substrates phosphorylated earlier in the cell cycle than less sensitive substrates. Phosphorylates dis1 during metaphase to ensure proper microtubule dynamics and accurate chromosome segregation. Phosphorylates the repetitive C-terminus of the large subunit of RNA polymerase II rpb1. Inactivated by checkpoint signaling following detection of cellular damage, leading to cell cycle arrest to allow damage repair. Inactivated during G2 DNA damage checkpoint signaling. Inactivated in response to defective RNA splicing. This chain is Cyclin-dependent kinase 1, found in Schizosaccharomyces pombe (strain 972 / ATCC 24843) (Fission yeast).